The following is a 278-amino-acid chain: MTGFGARLAEAKAHRGPLCLGIDPHPELLRAWDLPATADGLAAFCDICVAAFAGFAVVKPQVAFFEAYGAAGFAVLEGTMAALRANGVLVLADAKRGDIGSTMAAYAAAWAGDSPLAADAVTVSPFLGFGSLRPLLEVATANDRGVFVLAATSNPEGATIQRADADGRTVAQLIVDQVGLFNSEVGEVTGPEPGSVGVVVGATVLNPPDVSGLGGPVLVPGVGVQGGRPEALGGLGGAAPQQLLPAVSREVLRAGPSISEVRAAAERMLDSVAYLSAV.

Residue lysine 95 is the Proton donor of the active site.

The protein belongs to the OMP decarboxylase family. Type 2 subfamily.

The catalysed reaction is orotidine 5'-phosphate + H(+) = UMP + CO2. Its pathway is pyrimidine metabolism; UMP biosynthesis via de novo pathway; UMP from orotate: step 2/2. The protein is Orotidine 5'-phosphate decarboxylase of Mycobacterium marinum (strain ATCC BAA-535 / M).